The primary structure comprises 206 residues: Phosphoribosylglycinamide formyltransferase (206 aa).

Position 13–15 (13–15 (GTN)) interacts with N(1)-(5-phospho-beta-D-ribosyl)glycinamide. Residues 99–102 (MIIL) and Asn121 contribute to the (6R)-10-formyltetrahydrofolate site. His123 (proton donor) is an active-site residue. Position 163 (Asp163) interacts with (6R)-10-formyltetrahydrofolate. Glu192 is a binding site for N(1)-(5-phospho-beta-D-ribosyl)glycinamide.

The protein belongs to the GART family.

It carries out the reaction N(1)-(5-phospho-beta-D-ribosyl)glycinamide + (6R)-10-formyltetrahydrofolate = N(2)-formyl-N(1)-(5-phospho-beta-D-ribosyl)glycinamide + (6S)-5,6,7,8-tetrahydrofolate + H(+). Its pathway is purine metabolism; IMP biosynthesis via de novo pathway; N(2)-formyl-N(1)-(5-phospho-D-ribosyl)glycinamide from N(1)-(5-phospho-D-ribosyl)glycinamide (10-formyl THF route): step 1/1. The protein is Phosphoribosylglycinamide formyltransferase (purN) of Dictyostelium discoideum (Social amoeba).